A 310-amino-acid polypeptide reads, in one-letter code: Atrochrysone carboxyl ACP thioesterase CPUR_05436 (310 aa).

Positions 105, 107, 109, and 110 each coordinate Zn(2+). Asp-109 acts as the Proton donor/acceptor in catalysis.

Belongs to the metallo-beta-lactamase superfamily. Zn(2+) serves as cofactor.

It carries out the reaction atrochrysone carboxyl-[ACP] + H2O = atrochrysone carboxylate + holo-[ACP] + H(+). The protein operates within pigment biosynthesis. Its function is as follows. Atrochrysone carboxyl ACP thioesterase; part of the ergochrome gene cluster responsible for the typical purple-black color of the ergot sclerotia. The ergochrome gene cluster produces several ergot pigments including the yellow ergochrome secalonic acid and its derivatives, as well as the red anthraquinones endocrocin and clavorubin. The pathway begins with the synthesis of atrochrysone thioester by the polyketide synthase (PKS) CPUR_05437. The atrochrysone carboxyl ACP thioesterase CPUR_05436 then breaks the thioester bond and releases the atrochrysone carboxylic acid from CPUR_05437. The atrochrysone carboxylic acid is then converted to atrochrysone which is further transformed into emodin anthrone. The next step is performed by the anthrone oxygenase CPUR_05434 that catalyzes the oxidation of emodinanthrone to emodin. Emodin is further modified to yield monodictyphenone via several steps involving CPUR_05427, CPUR_05428, CPUR_05429 and CPUR_05430. The short chain dehydrogenase/reductase CPUR_05418 then catalyzes the C-5 ketoreduction to give the xanthone skeleton of the monomeric units. Ergochromes formation requires further dimerization steps of different xanthone units, probably catalyzed by the cytochrome P450 monooxygenase CPUR_05419. CPUR_05425, CPUR_05426 and CPUR_05431 are unique to Claviceps, thus it is likely that they are involved in further modification of xanthone units or in their dimerization. The yellow ergochromes and the red anthraquinone pigments endocrocin and clavorubin are products from the same PKS derived precursors and the latter are likely shunt products in the pathway of xanthone biosynthesis. It is proposed that atrochrysone carboxylic acid released from the PKS CPUR_05437 can also be converted to endocrocin anthrone which is further oxidized into endocrocin by CPUR_05435. Endocrocin could be then modified to clavorubin, possibly by CPUR_05423 and CPUR_05431. Clavorubin is the principal anthraquinone metabolite produced by the cluster with a much higher yield compared to endocrocin. In Claviceps purpurea (strain 20.1) (Ergot fungus), this protein is Atrochrysone carboxyl ACP thioesterase CPUR_05436.